The chain runs to 81 residues: NAD(P)H-quinone oxidoreductase subunit L (81 aa).

Transmembrane regions (helical) follow at residues 13 to 33 and 51 to 71; these read LLVIGAYGALGAAYLVVIPLF and LGIYGLVFLFFPGLILFAPFL.

Belongs to the complex I NdhL subunit family. As to quaternary structure, NDH-1 can be composed of about 15 different subunits; different subcomplexes with different compositions have been identified which probably have different functions.

The protein resides in the cellular thylakoid membrane. It carries out the reaction a plastoquinone + NADH + (n+1) H(+)(in) = a plastoquinol + NAD(+) + n H(+)(out). The enzyme catalyses a plastoquinone + NADPH + (n+1) H(+)(in) = a plastoquinol + NADP(+) + n H(+)(out). In terms of biological role, NDH-1 shuttles electrons from an unknown electron donor, via FMN and iron-sulfur (Fe-S) centers, to quinones in the respiratory and/or the photosynthetic chain. The immediate electron acceptor for the enzyme in this species is believed to be plastoquinone. Couples the redox reaction to proton translocation, and thus conserves the redox energy in a proton gradient. Cyanobacterial NDH-1 also plays a role in inorganic carbon-concentration. The polypeptide is NAD(P)H-quinone oxidoreductase subunit L (Synechococcus sp. (strain WH7803)).